Here is a 406-residue protein sequence, read N- to C-terminus: MTLDVGPEDELPDWAAAKEFYQKYDPKDIIGRGVSSVVRRCVHRATGDEFAVKIMEVSAERLSLEQLEEVRDATRREMHILRQVAGHPHIITLIDSYESSSFMFLVFDLMRKGELFDYLTEKVALSEKETRSIMRSLLEAVSFLHANNIVHRDLKPENILLDDNMQIRLSDFGFSCHLEAGEKLRELCGTPGYLAPEILKCSMDETHPGYGKEVDLWACGVILFTLLAGSPPFWHRRQILMLRMIMEGQYQFTSPEWDDRSNTVKDLISKLLQVDPEARLTAEQALQHPFFERCEGSQPWNLTPRQRFRVAVWTILAAGRVALSSHRLRPLTKNALLRDPYALRPVRRLIDNCAFRLYGHWVKKGEQQNRAALFQHQPPRLFPIAATELEGDSGAITEDEATLVRS.

Positions 24-291 (YDPKDIIGRG…AEQALQHPFF (268 aa)) constitute a Protein kinase domain. ATP contacts are provided by residues 30 to 38 (IGRGVSSVV) and lysine 53. Residue aspartate 153 is the Proton acceptor of the active site. Residues 306 to 330 (QRFRVAVWTILAAGRVALSSHRLRP) are calmodulin-binding (domain-N). Residues 346–370 (VRRLIDNCAFRLYGHWVKKGEQQNR) are calmodulin-binding (domain-C).

It belongs to the protein kinase superfamily. CAMK Ser/Thr protein kinase family. Hexadecamer of 4 heterotetramers, each composed of alpha, beta, gamma, and delta subunits. Alpha (PHKA1 or PHKA2) and beta (PHKB) are regulatory subunits, gamma (PHKG1 or PHKG2) is the catalytic subunit, and delta is calmodulin.

The enzyme catalyses 2 ATP + phosphorylase b = 2 ADP + phosphorylase a.. Functionally, catalytic subunit of the phosphorylase b kinase (PHK), which mediates the neural and hormonal regulation of glycogen breakdown (glycogenolysis) by phosphorylating and thereby activating glycogen phosphorylase. May regulate glycogeneolysis in the testis. In vitro, phosphorylates PYGM. This Mus musculus (Mouse) protein is Phosphorylase b kinase gamma catalytic chain, liver/testis isoform (Phkg2).